Here is a 372-residue protein sequence, read N- to C-terminus: Ciliary neurotrophic factor receptor subunit alpha (372 aa).

An N-terminal signal peptide occupies residues 1-22; that stretch reads MAAPVPWACCAVLAAAAAVVYA. Residues 27–104 form the Ig-like C2-type domain; sequence PQEAPHVQYE…WHLRHQVLLH (78 aa). A disulfide bond links Cys46 and Cys89. Residues Asn60, Asn70, Asn142, and Asn190 are each glycosylated (N-linked (GlcNAc...) asparagine). Fibronectin type-III domains are found at residues 108–205 and 206–306; these read PPRE…VKPD and PPEN…TEEP. The WSXWS motif motif lies at 290–294; sequence WSDWS. Positions 301–340 are disordered; the sequence is PWTEEPRHLTTEAQAAETTTSTTSSLAPPPTTKICDPGEL. The span at 311–326 shows a compositional bias: low complexity; the sequence is TEAQAAETTTSTTSSL. Ser342 carries the GPI-anchor amidated serine lipid modification. The propeptide at 343–372 is removed in mature form; that stretch reads GGGPSAPFLVSVPITLALAAAAATASSLLI.

Belongs to the type I cytokine receptor family. Type 3 subfamily. In terms of assembly, forms a heterotrimer with LIFR and IL6ST. Interacts with heterodimeric neurotropic cytokine composed of CLCF1/CLC and CRLF1/CLF-1. Either alone or in complex with the heterodimer CLCF1-CRLF1 interacts with SORL1; this interaction may promote internalization and lysosomal degradation. Component of a receptor complex composed of IL6ST/GP130, IL27RA/WSX1 and CNTFR which interacts with the neuroprotective peptide humanin. As to expression, nervous system and skeletal muscle.

Its subcellular location is the cell membrane. Binds to CNTF. The alpha subunit provides the receptor specificity. Receptor for heterodimeric neurotropic cytokine composed of CLCF1/CLC and CRLF1/CLF-1. Acts as a receptor for the neuroprotective peptide humanin as part of a complex with IL6ST/GP130 and IL27RA/WSX1. This Homo sapiens (Human) protein is Ciliary neurotrophic factor receptor subunit alpha (CNTFR).